Consider the following 349-residue polypeptide: NAC domain-containing protein JA2 (349 aa).

The NAC domain maps to 14–163 (LPPGFRFYPT…EWVLCRIYKK (150 aa)). The DNA-binding element occupies 111-169 (VGIKKALVFYVGKAPKGSKTNWIMHEYRLFESSRKNNGSSKLDEWVLCRIYKKNSSGPK). The tract at residues 169–194 (KPLMSGLHSSNEYSHGSSTSSSSQFD) is disordered. The span at 177–191 (SSNEYSHGSSTSSSS) shows a compositional bias: low complexity.

As to expression, expressed in guard cells of the epidermis.

The protein resides in the nucleus. Its function is as follows. Transcription factor involved in abscisic acid-mediated stomatal closure. Regulates the expression of NCED1, a gene involved in the biosynthesis of abscisic acid (ABA). Required for the stomatal closure induced by the bacterial pathogen Pseudomonas syringae pv tomato DC3000, but not for stomatal reopening. This chain is NAC domain-containing protein JA2, found in Solanum lycopersicum (Tomato).